A 220-amino-acid chain; its full sequence is Ribonuclease P protein component 3 (220 aa).

Belongs to the eukaryotic/archaeal RNase P protein component 3 family. In terms of assembly, consists of a catalytic RNA component and at least 4-5 protein subunits.

It localises to the cytoplasm. The catalysed reaction is Endonucleolytic cleavage of RNA, removing 5'-extranucleotides from tRNA precursor.. In terms of biological role, part of ribonuclease P, a protein complex that generates mature tRNA molecules by cleaving their 5'-ends. The polypeptide is Ribonuclease P protein component 3 (Thermococcus kodakarensis (strain ATCC BAA-918 / JCM 12380 / KOD1) (Pyrococcus kodakaraensis (strain KOD1))).